Consider the following 149-residue polypeptide: Deoxyuridine 5'-triphosphate nucleotidohydrolase (149 aa).

Substrate-binding positions include 68–70 (RSG), asparagine 81, 85–87 (LID), and methionine 95.

Belongs to the dUTPase family. The cofactor is Mg(2+).

The catalysed reaction is dUTP + H2O = dUMP + diphosphate + H(+). The protein operates within pyrimidine metabolism; dUMP biosynthesis; dUMP from dCTP (dUTP route): step 2/2. In terms of biological role, this enzyme is involved in nucleotide metabolism: it produces dUMP, the immediate precursor of thymidine nucleotides and it decreases the intracellular concentration of dUTP so that uracil cannot be incorporated into DNA. The sequence is that of Deoxyuridine 5'-triphosphate nucleotidohydrolase from Albidiferax ferrireducens (strain ATCC BAA-621 / DSM 15236 / T118) (Rhodoferax ferrireducens).